A 139-amino-acid chain; its full sequence is Ribulose bisphosphate carboxylase small subunit (139 aa).

This sequence belongs to the RuBisCO small chain family. Heterohexadecamer of 8 large and 8 small subunits.

The protein localises to the plastid. Its subcellular location is the chloroplast. In terms of biological role, ruBisCO catalyzes two reactions: the carboxylation of D-ribulose 1,5-bisphosphate, the primary event in carbon dioxide fixation, as well as the oxidative fragmentation of the pentose substrate in the photorespiration process. Both reactions occur simultaneously and in competition at the same active site. Although the small subunit is not catalytic it is essential for maximal activity. The sequence is that of Ribulose bisphosphate carboxylase small subunit from Trieres chinensis (Marine centric diatom).